Reading from the N-terminus, the 492-residue chain is MTLWINGDWITGQGALRVRRNPVSGEVLWQGNDADAAQVEQACRAARAAFPRWARLSFAERQAVVERFAGLLERNKGELTAIIARETGKPRWEAATEVTAMINKIAISIKAYHVRTGEQRSEMPDGAASLRHRPHGVLAVFGPYNFPGHLPNGHIVPALLAGNTIIFKPSELTPWSGEAVMRLWQQAGLPPGVLNLVQGGRETGQALSALEDLDGLLFTGSANTGYQLRRQLSGQPEKILALEMGGNNPLIIDEVADIDAAVHLTIQSAFVTAGQRCTCARRLLLKSGAQGDAFLARLVAVSQRLTPGNWDDEPQPFIGGLISEQAAQQVVTAWQQLEAMGGRTLLAPRLLQSETSLLTPGIIEMTGVAGVPDEEVFGPLLRVWRYDSFEEAILMANNTRFGLSCGLVSPEREKFDQLLLEARAGIVNWNKPLTGAASTAPFGGIGASGNHRPSAWYAADYCAWPMASLESDSLTLPATLNPGLDFSDEVVR.

220 to 225 serves as a coordination point for NAD(+); it reads GSANTG. Active-site residues include Glu243 and Cys277.

The protein belongs to the aldehyde dehydrogenase family. AstD subfamily.

It catalyses the reaction N-succinyl-L-glutamate 5-semialdehyde + NAD(+) + H2O = N-succinyl-L-glutamate + NADH + 2 H(+). The protein operates within amino-acid degradation; L-arginine degradation via AST pathway; L-glutamate and succinate from L-arginine: step 4/5. Its function is as follows. Catalyzes the NAD-dependent reduction of succinylglutamate semialdehyde into succinylglutamate. The chain is N-succinylglutamate 5-semialdehyde dehydrogenase from Escherichia coli (strain ATCC 8739 / DSM 1576 / NBRC 3972 / NCIMB 8545 / WDCM 00012 / Crooks).